Here is a 2513-residue protein sequence, read N- to C-terminus: MEKPVVNVDVDPQSPFVVQLQKSFPQFEVVAQQVTPNDHANARAFSHLASKLIELEVPTTATILDIGSAPARRMFSEHQYHCVCPMRSPEDPDRMMKYASKLAEKACKITNKNLHEKIKDLRTVLDTPDAETPSLCFHNDVTCNMRAEYSVMQDVYINAPGTIYHQAMKGVRTLYWIGFDTTQFMFSAMAGSYPAYNTNWADEKVLEARNIGLCSTKLSEGRTGKLSIMRKKELKPGSRVYFSVGSTLYPEHRASLQSWHLPSVFHLNGKQSYTCRCDTVVSCEGYVVKKITISPGITGETVGYAVTHNSEGFLLCKVTDTVKGERVSFPVCTYIPATICDQMTGIMATDISPDDAQKLLVGLNQRIVINGRTNRNTNTMQNYLLPIIAQGFSKWAKERKDDLDNEKMLGTRERKLTYGCLWAFRTKKVHSFYRPPGTQTCVKVPASFSAFPMSSVWTTSLPMSLRQKLKLALQPKKEEKLLQVSEELVMEAKAAFEDAQEEARAEKLREALPPLVADKGIEAAAEVVCEVEGLQADIGAALVETPRGHVRIIPQANDRMIGQYIVVSPNSVLKNAKLAPAHPLADQVKIITHSGRSGRYAVEPYDAKVLMPAGGAVPWPEFLALSESATLVYNEREFVNRKLYHIAMHGPAKNTEEEQYKVTKAELAETEYVFDVDKKRCVKKEEASGLVLSGELTNPPYHELALEGLKTRPAVPYKVETIGVIGTPGSGKSAIIKSTVTARDLVTSGKKENCREIEADVLRLRGMQITSKTVDSVMLNGCHKAVEVLYVDEAFACHAGALLALIAIVRPRKKVVLCGDPMQCGFFNMMQLKVHFNHPEKDICTKTFYKYISRRCTQPVTAIVSTLHYDGKMKTTNPCKKNIEIDITGATKPKPGDIILTCFRGWVKQLQIDYPGHEVMTAAASQGLTRKGVYAVRQKVNENPLYAITSEHVNVLLTRTEDRLVWKTLQGDPWIKQPTNIPKGNFQATIEDWEAEHKGIIAAINSPTPRANPFSCKTNVCWAKALEPILATAGIVLTGCQWSELFPQFADDKPHSAIYALDVICIKFFGMDLTSGLFSKQSIPLTYHPADSARPVAHWDNSPGTRKYGYDHAIAAELSRRFPVFQLAGKGTQLDLQTGRTRVISAQHNLVPVNRNLPHALVPEYKEKQPGPVKKFLNQFKHHSVLVVSEEKIEAPRKRIEWIAPIGIAGADKNYNLAFGFPPQARYDLVFINIGTKYRNHHFQQCEDHAATLKTLSRSALNCLNPGGTLVVKSYGYADRNSEDVVTALARKFVRVSAARPDCVSSNTEMYLIFRQLDNSRTRQFTPHHLNCVISSVYEGTRDGVGAAPSYRTKRENIADCQEEAVVNAANPLGRPGEGVCRAIYKRWPTSFTDSATETGTARMTVCLGKKVIHAVGPDFRKHPEAEALKLLQNAYHAVADLVNEHNIKSVAIPLLSTGIYAAGKDRLEVSLNCLTTALDRTDADVTIYCLDKKWKERIDAALQLKESVTELKDEDMEIDDELVWIHPDSCLKGRKGFSTTKGKLYSYFEGTKFHQAAKDMAEIKVLFPNDQESNEQLCAYILGETMEAIREKCPVDHNPSSSPPKTLPCLCMYAMTPERVHRLRSNNVKEVTVCSSTPLPKHKIKNVQKVQCTKVVLFNPHTPAFVPARKYIEVPEQPTAPPAQAEEAPEVVATPSPSTADNTSLDVTDISLDMDDSSEGSLFSSFSGSDNSITSMDSWSSGPSSLEIVDRRQVVVADVHAVQEPAPIPPPRLKKMARLAAARKEPTPPASNSSESLHLSFGGVSMSLGSIFDGETARQAAVQPLATGPTDVPMSFGSFSDGEIDELSRRVTESEPVLFGSFEPGEVNSIISSRSAVSFPLRKQRRRRRSRRTEYXLTGVGGYIFSTDTGPGHLQKKSVLQNQLTEPTLERNVLERIHAPVLDTSKEEQLKLRYQMMPTEANKSRYQSRKVENQKAITTERLLSGLRLYNSATDQPECYKITYPKPLYSSSVPANYSDPQFAVAVCNNYLHENYPTVASYQITDEYDAYLDMVDGTVACLDTATFCPAKLRSYPKKHEYRAPNIRSAVPSAMQNTLQNVLIAATKRNCNVTQMRELPTLDSATFNVECFRKYACNDEYWEEFARKPIRITTEFVTAYVARLKGPKAAALFAKTYNLVPLQEVPMDRFVMDMKRDVKVTPGTKHTEERPKVQVIQAAEPLATAYLCGIHRELVRRLTAVLLPNIHTLFDMSAEDFDAIIAEHFKQGDPVLETDIASFDKSQDDAMALTGLMILEDLGVDQPLLDLIECAFGEISSTHLPTGTRFKFGAMMKSGMFLTLFVNTVLNVVIASRVLEERLKTSRCAAFIGDDNIIHGVVSDKEMAERCATWLNMEVKIIDAVIGERPPYFCGGFILQDSVTSTACRVADPLKRLFKLGKPLPADDEQDEDRRRALLDETKAWFRVGITGTLAVAVTTRYEVDNITPVLLALRTFAQSKRAFQAIRGEIKHLYGGPK.

Residues 30-260 (VAQQVTPNDH…EHRASLQSWH (231 aa)) form the Alphavirus-like MT domain. The segment at 245-264 (GSTLYPEHRASLQSWHLPSV) is nsP1 membrane-binding. Cysteine 420 carries the S-palmitoyl cysteine; by host lipid modification. The region spanning 695–850 (ELTNPPYHEL…KDICTKTFYK (156 aa)) is the (+)RNA virus helicase ATP-binding domain. 726–733 (GTPGSGKS) lines the a ribonucleoside 5'-triphosphate pocket. Residues 851–999 (YISRRCTQPV…IEDWEAEHKG (149 aa)) form the (+)RNA virus helicase C-terminal domain. Residues 1012 to 1341 (NPFSCKTNVC…CVISSVYEGT (330 aa)) form the Peptidase C9 domain. Residues 1013-1032 (PFSCKTNVCWAKALEPILAT) are nucleolus localization signal. Cysteine 1021 serves as the catalytic For cysteine protease nsP2 activity. A Nuclear export signal motif is present at residues 1066 to 1075 (IKFFGMDLTS). Residue histidine 1098 is the For cysteine protease nsP2 activity of the active site. Residues 1196–1200 (PRKRI) carry the Nuclear localization signal motif. The 160-residue stretch at 1348-1507 (APSYRTKREN…RIDAALQLKE (160 aa)) folds into the Macro domain. Asparagine 1371, glycine 1379, glycine 1459, isoleucine 1460, and tyrosine 1461 together coordinate ADP-D-ribose. Residues cysteine 1610, cysteine 1612, cysteine 1635, and cysteine 1653 each coordinate Zn(2+). Over residues 1679–1696 (PTAPPAQAEEAPEVVATP) the composition is skewed to low complexity. Residues 1679-1705 (PTAPPAQAEEAPEVVATPSPSTADNTS) are disordered. Short sequence motifs (FGDF; binding to host G3BP1) lie at residues 1837 to 1840 (FGSF) and 1860 to 1863 (FGSF). The 116-residue stretch at 2267 to 2382 (DPVLETDIAS…HGVVSDKEMA (116 aa)) folds into the RdRp catalytic domain.

Interacts with non-structural protein 3. Interacts with RNA-directed RNA polymerase nsP4. Interacts with protease nsP2. interacts with itself. Interacts with host TMEM45B; this interaction leads to viral replication inhibition. In terms of assembly, interacts with mRNA-capping enzyme nsP1. Interacts with host DDX1. Interacts with host DDX3. Interacts (via C-terminus) with host G3BP1; this interaction inhibits the formation of host stress granules on viral mRNAs and the nsp3-G3BP1 complexes bind viral RNAs and probably orchestrate the assembly of viral replication complexes. Interacts (via C-terminus) with host G3BP2; this interaction inhibits the formation of host stress granules on viral mRNAs and the nsp3-G3BP2 complexes bind viral RNAs and probably orchestrate the assembly of viral replication complexes. As to quaternary structure, interacts with mRNA-capping enzyme nsP1. Interacts with protease nsP2. interacts with itself. Interacts with host TMEM45B; this interaction leads to viral replication inhibition. Interacts with RNA-directed RNA polymerase nsP4. Interacts with mRNA-capping enzyme nsP1. Interacts with KPNA1/karyopherin-alpha1; this interaction probably allows the active transport of protease nsP2 into the host nucleus. The cofactor is Mg(2+). Mn(2+) is required as a cofactor. In terms of processing, specific enzymatic cleavages in vivo yield mature proteins. The processing of the polyprotein is temporally regulated. In early stages (1.7 hpi), P1234 is first cleaved in trans through its nsP2 protease activity, releasing P123' and nsP4, which associate to form the early replication complex. At the same time, P1234 is also cut at the nsP1/nsP2 site early in infection but with lower efficiency. After replication of the viral minus-strand RNAs (4 hpi), the polyproteins are cut at the nsP1/nsP2 and nsP2/nsP3 sites very efficiently, preventing accumulation of P123' and P1234 and allowing the formation of the late replication complex. NsP3'/nsP4 site is not cleaved anymore and P34 is produced rather than nsP4. Specific enzymatic cleavages in vivo yield mature proteins. The processing of the polyprotein is temporally regulated. In early stages (1.7 hpi), P123 is cleaved at the nsP1/nsP2 site with low efficiency. After replication of the viral minus-strand RNAs (4 hpi), the polyproteins are cut at the nsP1/nsP2 and nsP2/nsP3 sites very efficiently, preventing accumulation of P123 and allowing the formation of the late replication complex. Post-translationally, specific enzymatic cleavages in vivo yield mature proteins. The processing of the polyprotein is temporally regulated. In early stages (1.7 hpi), P123' is cleaved at the nsP1/nsP2 site with low efficiency. After replication of the viral minus-strand RNAs (4 hpi), the polyproteins are cut at the nsP1/nsP2 and nsP2/nsP3 sites very efficiently, preventing accumulation of P123' and allowing the formation of the late replication complex. In terms of processing, palmitoylated by host palmitoyltransferases ZDHHC2 and ZDHHC19. Phosphorylated by host on serines and threonines. Post-translationally, ubiquitinated; targets the protein for rapid degradation via the ubiquitin system. Nsp4 is present in extremely low quantities due to low frequency of translation through the amber stop-codon and the degradation by the ubiquitin pathway.

The protein localises to the host cytoplasmic vesicle membrane. The protein resides in the host cell membrane. It localises to the host cell projection. Its subcellular location is the host filopodium. It is found in the host nucleus. The protein localises to the host cytoplasm. It carries out the reaction GTP + S-adenosyl-L-methionine = N(7)-methyl-GTP + S-adenosyl-L-homocysteine. It catalyses the reaction N(7)-methyl-GTP + L-histidyl-[protein] = N(tele)-(N(7)-methylguanosine 5'-phospho)-L-histidyl-[protein] + diphosphate. The enzyme catalyses N(tele)-(N(7)-methylguanosine 5'-phospho)-L-histidyl-[protein] + a 5'-end diphospho-(purine-ribonucleoside) in mRNA + H(+) = a 5'-end (N(7)-methyl 5'-triphosphoguanosine)-(purine-ribonucleoside) in mRNA + L-histidyl-[protein]. The catalysed reaction is a 5'-end triphospho-ribonucleoside in mRNA + H2O = a 5'-end diphospho-ribonucleoside in mRNA + phosphate + H(+). It carries out the reaction a ribonucleoside 5'-triphosphate + H2O = a ribonucleoside 5'-diphosphate + phosphate + H(+). It catalyses the reaction ATP + H2O = ADP + phosphate + H(+). The enzyme catalyses RNA(n) + a ribonucleoside 5'-triphosphate = RNA(n+1) + diphosphate. The catalysed reaction is RNA(n) + ATP = RNA(n)-3'-adenine ribonucleotide + diphosphate. It carries out the reaction 4-O-(ADP-D-ribosyl)-L-aspartyl-[protein] + H2O = L-aspartyl-[protein] + ADP-D-ribose + H(+). It catalyses the reaction 5-O-(ADP-D-ribosyl)-L-glutamyl-[protein] + H2O = L-glutamyl-[protein] + ADP-D-ribose + H(+). The enzyme catalyses ADP-alpha-D-ribose 1''-phosphate + H2O = ADP-D-ribose + phosphate. In terms of biological role, inactive precursor of the viral replicase, which is activated by cleavages carried out by the viral protease nsP2. Functionally, the early replication complex formed by the polyprotein P123 and nsP4 synthesizes minus-strand RNAs. Polyprotein P123 is a short-lived polyprotein that accumulates during early stage of infection. As soon P123 is cleaved into mature proteins, the plus-strand RNAs synthesis begins. The early replication complex formed by the polyprotein P123' and nsP4 synthesizes minus-strand RNAs. Polyprotein P123' is a short-lived polyprotein that accumulates during early stage of infection. As soon P123' is cleaved into mature proteins, the plus-strand RNAs synthesis begins. Its function is as follows. Cytoplasmic capping enzyme that catalyzes two virus-specific reactions: methyltransferase and nsP1 guanylyltransferase. mRNA-capping is necessary since all viral RNAs are synthesized in the cytoplasm, and host capping enzymes are restricted to the nucleus. The enzymatic reaction involves a covalent link between 7-methyl-GMP and nsP1, whereas eukaryotic capping enzymes form a covalent complex only with GMP. nsP1 capping consists in the following reactions: GTP is first methylated into 7-methyl-GMP and then is covalently linked to nsP1 to form the m7GMp-nsP1 complex from which 7-methyl-GMP complex is transferred to the mRNA to create the cap structure. NsP1 is needed for the initiation of the minus-strand RNAs synthesis. Probably serves as a membrane anchor for the replication complex composed of nsP1-nsP4. Palmitoylated nsP1 is remodeling host cell cytoskeleton, and induces filopodium-like structure formation at the surface of the host cell. In terms of biological role, multifunctional protein whose N-terminus is part of the RNA polymerase complex and displays NTPase, RNA triphosphatase and helicase activities. NTPase and RNA triphosphatase are involved in viral RNA capping and helicase keeps a check on the dsRNA replication intermediates. The C-terminus harbors a protease that specifically cleaves the polyproteins and releases the mature proteins. Required for the shutoff of minus-strand RNAs synthesis. Specifically inhibits the host IFN response by promoting the nuclear export of host STAT1. Also inhibits host transcription by inducing rapid proteasome-dependent degradation of POLR2A, a catalytic subunit of the RNAPII complex. The resulting inhibition of cellular protein synthesis serves to ensure maximal viral gene expression and to evade host immune response. Functionally, seems to be essential for minus-strand RNAs and subgenomic 26S mRNAs synthesis. Displays mono-ADP-ribosylhydrolase activity. ADP-ribosylation is a post-translantional modification that controls various processes of the host cell and the virus probably needs to revert it for optimal viral replication. Binds proteins of G3BP family and sequesters them into the viral RNA replication complexes thereby inhibiting the formation of host stress granules on viral mRNAs. The nsp3-G3BP complexes bind viral RNAs and probably orchestrate the assembly of viral replication complexes, thanks to the ability of G3BP family members to self-assemble and bind DNA. Seems to be essential for minus-strand RNAs and subgenomic 26S mRNAs synthesis. Displays mono-ADP-ribosylhydrolase activity. ADP-ribosylation is a post-translational modification that controls various processes of the host cell and the virus probably needs to revert it for optimal viral replication. Binds proteins of G3BP family and sequesters them into the viral RNA replication complexes thereby inhibiting the formation of host stress granules on viral mRNAs. The nsp3'-G3BP complexes bind viral RNAs and probably orchestrate the assembly of viral replication complexes, thanks to the ability of G3BP family members to self-assemble and bind DNA. Its function is as follows. RNA dependent RNA polymerase. Replicates genomic and antigenomic RNA by recognizing replications specific signals. The early replication complex formed by the polyprotein P123 and nsP4 synthesizes minus-strand RNAs. The late replication complex composed of fully processed nsP1-nsP4 is responsible for the production of genomic and subgenomic plus-strand RNAs. The core catalytic domain of nsP4 also possesses terminal adenylyltransferase (TATase) activity that is probably involved in maintenance and repair of the poly(A) tail, an element required for replication of the viral genome. This is Polyprotein P1234 from Acrocephalus scirpaceus (Eurasian reed-warbler).